The primary structure comprises 356 residues: MALCIKNGFLAAALVLVGLLMCSIQMIGAQSIGVCYGKIANNLPSEQDVINLYKANGIRKMRIYYPDKNIFKALKGSNIEIILDVPNQDLEALANSSIANGWVQDNIRSHFPYVKFKYISIGNEVSPINNGQYSQFLLHAMENVYNALAASGLQDKIKVTTATYSGLLANTYPPKASIFRGEFNSFINPIIQFLAQNNLPLLANVYPYFVHISNTADVPLSYALFTQRGKNSAGYQNLFDAILDSMYFAVEKAGGPNVEIIVSESGWPSEGNSAATIENAQTYYRNLIDHVKRGAGTPKKPGKSIETYLFAMFDENVKKGEITEKHFGLFSPDQRAKYQLNFNSLMPIYIDISRVI.

The N-terminal stretch at 1 to 29 is a signal peptide; it reads MALCIKNGFLAAALVLVGLLMCSIQMIGA. Position 30 is a pyrrolidone carboxylic acid (glutamine 30). A glycan (N-linked (GlcNAc...) asparagine) is linked at asparagine 95. Glutamate 124 functions as the Proton donor in the catalytic mechanism. Glutamate 264 (nucleophile) is an active-site residue.

The protein belongs to the glycosyl hydrolase 17 family. As to expression, is expressed primarily in epidermal cell of healthy plant, and following induction by ethylene, accumulates in mesophyll cells.

It localises to the secreted. It is found in the extracellular space. It carries out the reaction Hydrolysis of (1-&gt;3)-beta-D-glucosidic linkages in (1-&gt;3)-beta-D-glucans.. In terms of biological role, is thought to be an important plant defense-related product against fungal pathogens. The sequence is that of Glucan endo-1,3-beta-glucosidase, acidic isoform GL153 (GGL4) from Nicotiana tabacum (Common tobacco).